The chain runs to 429 residues: Serine hydroxymethyltransferase (429 aa).

Residues leucine 126 and 130–132 contribute to the (6S)-5,6,7,8-tetrahydrofolate site; that span reads GHL. At lysine 235 the chain carries N6-(pyridoxal phosphate)lysine. Residue 359 to 361 coordinates (6S)-5,6,7,8-tetrahydrofolate; sequence SPF.

The protein belongs to the SHMT family. In terms of assembly, homodimer. It depends on pyridoxal 5'-phosphate as a cofactor.

The protein resides in the cytoplasm. The enzyme catalyses (6R)-5,10-methylene-5,6,7,8-tetrahydrofolate + glycine + H2O = (6S)-5,6,7,8-tetrahydrofolate + L-serine. Its pathway is one-carbon metabolism; tetrahydrofolate interconversion. The protein operates within amino-acid biosynthesis; glycine biosynthesis; glycine from L-serine: step 1/1. In terms of biological role, catalyzes the reversible interconversion of serine and glycine with tetrahydrofolate (THF) serving as the one-carbon carrier. This reaction serves as the major source of one-carbon groups required for the biosynthesis of purines, thymidylate, methionine, and other important biomolecules. Also exhibits THF-independent aldolase activity toward beta-hydroxyamino acids, producing glycine and aldehydes, via a retro-aldol mechanism. This chain is Serine hydroxymethyltransferase, found in Parasynechococcus marenigrum (strain WH8102).